The primary structure comprises 419 residues: ADIPOR-like receptor IZH3 (419 aa).

The interval 1–65 is disordered; it reads MSHPNTHMPR…GEAGGGRSVL (65 aa). Residues 1–147 lie on the Lumenal side of the membrane; sequence MSHPNTHMPR…LNAYGWHNET (147 aa). The N-linked (GlcNAc...) asparagine glycan is linked to Asn-145. Residues 148-168 traverse the membrane as a helical segment; that stretch reads INIWSHLVGAAVLAYLLCWGW. Residues 169 to 184 lie on the Cytoplasmic side of the membrane; the sequence is PRSDVYRAAQVPRLAK. Residues 185 to 205 traverse the membrane as a helical segment; the sequence is WAIGAFLACGVKCMASSVAWH. Over 206–225 the chain is Lumenal; that stretch reads TFNGTCHLKLRSRFVCVDYT. Asn-208 carries an N-linked (GlcNAc...) asparagine glycan. The helical transmembrane segment at 226–246 threads the bilayer; sequence GITLLVTASVVTTVAVTLYGL. Over 247–249 the chain is Cytoplasmic; it reads SRP. The helical transmembrane segment at 250-270 threads the bilayer; the sequence is LMYAYMVASIGLGTAAGVMNW. At 271-283 the chain is on the lumenal side; sequence SPHFDRPEARPLR. A helical membrane pass occupies residues 284-304; sequence IAVYVGLAALGLVSFVHVWMQ. At 305 to 311 the chain is on the cytoplasmic side; it reads VRWASAH. The chain crosses the membrane as a helical span at residues 312 to 332; it reads LMAPLVYKSLVWYGIGVVFYA. Residues 333–377 are Lumenal-facing; that stretch reads TLVPERWRSDVTLDCCSGPVHEAACRQFRDLPPVARKDRQFWSLW. Residues 378-398 traverse the membrane as a helical segment; sequence WVDYFCHSHFLWHVFVVLGVV. Residues 399–419 are Cytoplasmic-facing; the sequence is GHYRAVLQMSRIVWLDAGRAF.

The protein belongs to the ADIPOR family.

Its subcellular location is the endoplasmic reticulum membrane. In terms of biological role, ADIPOR-like receptor involved in zinc metabolism either by altering membrane sterol content or by directly altering cellular zinc levels. This Eremothecium gossypii (strain ATCC 10895 / CBS 109.51 / FGSC 9923 / NRRL Y-1056) (Yeast) protein is ADIPOR-like receptor IZH3 (IZH3).